The following is a 505-amino-acid chain: 2,3-bisphosphoglycerate-independent phosphoglycerate mutase (505 aa).

Mn(2+) is bound by residues aspartate 12 and serine 62. Catalysis depends on serine 62, which acts as the Phosphoserine intermediate. Residues histidine 123, 153–154 (RD), arginine 185, arginine 191, 257–260 (RPDR), and lysine 330 each bind substrate. Mn(2+)-binding residues include aspartate 397, histidine 401, aspartate 438, histidine 439, and histidine 456.

This sequence belongs to the BPG-independent phosphoglycerate mutase family. In terms of assembly, monomer. Mn(2+) is required as a cofactor.

The catalysed reaction is (2R)-2-phosphoglycerate = (2R)-3-phosphoglycerate. Its pathway is carbohydrate degradation; glycolysis; pyruvate from D-glyceraldehyde 3-phosphate: step 3/5. Catalyzes the interconversion of 2-phosphoglycerate and 3-phosphoglycerate. The polypeptide is 2,3-bisphosphoglycerate-independent phosphoglycerate mutase (Staphylococcus aureus (strain MRSA252)).